The primary structure comprises 544 residues: High affinity immunoglobulin alpha and immunoglobulin mu Fc receptor (544 aa).

An N-terminal signal peptide occupies residues 1-16 (MPLFLILCLLQGSSFA). Topologically, residues 17-462 (LPQKRPHPRW…TFPEDESSSR (446 aa)) are extracellular. The Ig-like V-type domain occupies 61–169 (PNALKGSRLV…NMLFLSMNLT (109 aa)). The tract at residues 75 to 97 (GGAVTIQCHYAPSSVNRHQRKYW) is mediates immunoglobulin Fc fragment-binding. The cysteines at positions 82 and 153 are disulfide-linked. N-linked (GlcNAc...) asparagine glycosylation occurs at asparagine 167. A disordered region spans residues 218 to 325 (DTVASTPGTS…TTKADRPRED (108 aa)). Composition is skewed to polar residues over residues 220 to 232 (VAST…TTAS) and 280 to 291 (ASKSRSMSNTTE). The span at 307 to 325 (ASKDRREITTTKADRPRED) shows a compositional bias: basic and acidic residues. A helical transmembrane segment spans residues 463–483 (TLAPVSTMLALFMLMALVLLQ). Residues 484–544 (RKLRRRRTSQ…LTAPERNPGP (61 aa)) lie on the Cytoplasmic side of the membrane. Residues 511–544 (PQPDQLPHVERKMLQDDSLPAGASLTAPERNPGP) are disordered.

In terms of assembly, interacts with IGHM; this interaction facilitates the endocytosis of IgM-coated microbes or IgM-antigen immune complexes. In terms of processing, N-glycosylated.

The protein localises to the cell membrane. Functionally, functions as a receptor for the Fc fragment of IgA and IgM. Binds IgA and IgM with high affinity and mediates their endocytosis. May function in the immune response to microbes mediated by IgA and IgM. This is High affinity immunoglobulin alpha and immunoglobulin mu Fc receptor (FCAMR) from Pongo abelii (Sumatran orangutan).